The following is a 544-amino-acid chain: Chaperonin GroEL (544 aa).

ATP is bound by residues 30–33 (TLGP), Lys51, 87–91 (DGTTT), Gly415, and Asp495.

It belongs to the chaperonin (HSP60) family. Forms a cylinder of 14 subunits composed of two heptameric rings stacked back-to-back. Interacts with the co-chaperonin GroES.

It is found in the cell outer membrane. The enzyme catalyses ATP + H2O + a folded polypeptide = ADP + phosphate + an unfolded polypeptide.. Together with its co-chaperonin GroES, plays an essential role in assisting protein folding. The GroEL-GroES system forms a nano-cage that allows encapsulation of the non-native substrate proteins and provides a physical environment optimized to promote and accelerate protein folding. This chain is Chaperonin GroEL, found in Neisseria gonorrhoeae.